The following is a 1475-amino-acid chain: Sex-determining transformer protein 2 (1475 aa).

The first 31 residues, 1–31 (MKLKYNKLLVSVVIVTFVTFGLLLAECFGKS), serve as a signal peptide directing secretion. 11 helical membrane passes run 446–466 (TIHFVVNVHSLIVILFTIFVW), 474–494 (AFMFFVRDALTCLLFCFVCST), 496–516 (GVIVLDTELIKYIIVLTLANL), 589–609 (WGCTSILIFPIVFVYWYFIDS), 737–757 (GVILCIPAILLIVISIGLLFI), 902–922 (AVGVLYEHYHRIAVVWNLFAF), 928–948 (AGIFIILLSIITFIFAITPTI), 952–972 (FLFSLLVVGTQIEVAALVHLF), 979–999 (IYTNLALFAGFLAAWDPFCAL), 1034–1054 (IAQFFVLLITAFSILAIICSI), and 1060–1080 (IFFVPTVILIVIQIVAVFNSI). Residues 1133 to 1273 (EFSIKRSSPP…RERNLMNKRS (141 aa)) form an interaction with fem-3 region. 2 disordered regions span residues 1142-1194 (PCRY…GDNT) and 1267-1330 (NLMN…VDEP). Positions 1178–1188 (RSPKTGNKRVR) are enriched in basic residues. A compositionally biased stretch (basic and acidic residues) spans 1276 to 1310 (QRRESRNIEKMKKSQENLDKEKSEEKISESKKNQD). The MX regulatory domain; required for tra-1 binding stretch occupies residues 1392–1413 (CEDIYWTHRTGQLPPGLQVPRR). The disordered stretch occupies residues 1424–1475 (TPPPEDLNWVPPAESPPIPIPQQAFDLLEERRRNHREQQDEAREGDLSDPEV). The segment covering 1451-1469 (LEERRRNHREQQDEAREGD) has biased composition (basic and acidic residues).

As to quaternary structure, interacts with tra-1 and fem-3. Undergoes cleavage by tra-3 to produce a feminizing carboxy-terminal isoform Tra-2B. As to expression, somatic and germline tissues. Isoform Tra-2B is specific to oocytes.

The protein localises to the membrane. Plays a major role in controlling sexual cell fates. Promotes female development in XX animals where it sequesters one or more of the FEM proteins to the membrane thereby freeing the tra-1 protein (a putative transcription factor) to enter the nucleus and promote female development. In XO animals it acts as a receptor for her-1 which prevents it from binding to FEM proteins thereby repressing the activity of tra-1. Negatively regulates male development when bound to fem-3 and is required together with tra-1 for promoting spermatogenesis. Also required for feminizing tra-3 activity. This chain is Sex-determining transformer protein 2 (tra-2), found in Caenorhabditis elegans.